The sequence spans 235 residues: Aspartate/glutamate leucyltransferase (235 aa).

It belongs to the R-transferase family. Bpt subfamily.

Its subcellular location is the cytoplasm. The enzyme catalyses N-terminal L-glutamyl-[protein] + L-leucyl-tRNA(Leu) = N-terminal L-leucyl-L-glutamyl-[protein] + tRNA(Leu) + H(+). It catalyses the reaction N-terminal L-aspartyl-[protein] + L-leucyl-tRNA(Leu) = N-terminal L-leucyl-L-aspartyl-[protein] + tRNA(Leu) + H(+). Functions in the N-end rule pathway of protein degradation where it conjugates Leu from its aminoacyl-tRNA to the N-termini of proteins containing an N-terminal aspartate or glutamate. The protein is Aspartate/glutamate leucyltransferase of Pseudomonas putida (strain ATCC 700007 / DSM 6899 / JCM 31910 / BCRC 17059 / LMG 24140 / F1).